The sequence spans 341 residues: S-adenosylmethionine:tRNA ribosyltransferase-isomerase (341 aa).

The protein belongs to the QueA family. Monomer.

It is found in the cytoplasm. It catalyses the reaction 7-aminomethyl-7-carbaguanosine(34) in tRNA + S-adenosyl-L-methionine = epoxyqueuosine(34) in tRNA + adenine + L-methionine + 2 H(+). The protein operates within tRNA modification; tRNA-queuosine biosynthesis. Transfers and isomerizes the ribose moiety from AdoMet to the 7-aminomethyl group of 7-deazaguanine (preQ1-tRNA) to give epoxyqueuosine (oQ-tRNA). In Staphylococcus aureus (strain USA300), this protein is S-adenosylmethionine:tRNA ribosyltransferase-isomerase.